We begin with the raw amino-acid sequence, 276 residues long: MAQGSPATVAACAFCGARRTRSGMVLSTSAADGYLDDEAQFETALRLLPAADQAAVRRRRAGRAVVLASRLLRTLGCAVHTGCAPALLAFDYSRAGKPYLRSRPAPAFSVSRSDCIAVIYVREGGAVGADLASVAECLSWAPDEILQLHDVFSAAELGRLRAAAPGRARAELFAYYWSLKEAYGKFRGTGLAGDLRLADMGELDPLRRGELRTLRRTLQGKHVCLSSRWHDAGHVLSLCEAREPSPTEEICLHKVPMEEVVRLCRPSLGMEKCHVR.

The protein belongs to the P-Pant transferase superfamily. AcpS family.

The catalysed reaction is apo-[ACP] + CoA = holo-[ACP] + adenosine 3',5'-bisphosphate + H(+). Catalyzes the transfer of a 4'-phosphopantetheine moiety from coenzyme A to a serine residue of acceptor proteins, such as alpha-aminoadipate reductase. Necessary for alpha-aminoadipate reductase activity. This chain is L-aminoadipate-semialdehyde dehydrogenase-phosphopantetheinyl transferase (LYS5), found in Eremothecium gossypii (strain ATCC 10895 / CBS 109.51 / FGSC 9923 / NRRL Y-1056) (Yeast).